Consider the following 110-residue polypeptide: Nucleoid-associated protein SYO3AOP1_1366 (110 aa).

The protein belongs to the YbaB/EbfC family. In terms of assembly, homodimer.

It is found in the cytoplasm. It localises to the nucleoid. Binds to DNA and alters its conformation. May be involved in regulation of gene expression, nucleoid organization and DNA protection. In Sulfurihydrogenibium sp. (strain YO3AOP1), this protein is Nucleoid-associated protein SYO3AOP1_1366.